A 149-amino-acid chain; its full sequence is Calmodulin (149 aa).

Position 2 is an N-acetylalanine (A2). EF-hand domains follow at residues 8–43 (EQIA…LGQN), 44–79 (PTEA…KMKD), 81–116 (DTEE…LGEK), and 117–149 (LTDE…MMAK). Positions 21, 23, 25, 27, 32, 57, 59, 61, 63, 68, 94, 96, 98, and 105 each coordinate Ca(2+). At K116 the chain carries N6,N6,N6-trimethyllysine. Residues D130, D132, D134, Q136, and E141 each coordinate Ca(2+).

Belongs to the calmodulin family.

In terms of biological role, calmodulin mediates the control of a large number of enzymes, ion channels and other proteins by Ca(2+). Among the enzymes to be stimulated by the calmodulin-Ca(2+) complex are a number of protein kinases and phosphatases. This chain is Calmodulin, found in Heterocapsa triquetra (Dinoflagellate).